We begin with the raw amino-acid sequence, 329 residues long: Fructose-1,6-bisphosphatase class 1 (329 aa).

Mg(2+) is bound by residues Glu84, Asp103, Leu105, and Asp106. Substrate contacts are provided by residues 106–109, Asn196, and Lys262; that span reads DGSS. Glu268 contributes to the Mg(2+) binding site.

Belongs to the FBPase class 1 family. Homotetramer. It depends on Mg(2+) as a cofactor.

The protein resides in the cytoplasm. The catalysed reaction is beta-D-fructose 1,6-bisphosphate + H2O = beta-D-fructose 6-phosphate + phosphate. It participates in carbohydrate biosynthesis; gluconeogenesis. This Shewanella woodyi (strain ATCC 51908 / MS32) protein is Fructose-1,6-bisphosphatase class 1.